A 150-amino-acid polypeptide reads, in one-letter code: Cytochrome c oxidase subunit 5A, mitochondrial (150 aa).

A mitochondrion-targeting transit peptide spans 1–41 (MLGAALRRCAVAATAWAGPRGLLHSAPTPGPAAAIHSVRCY). An SIFI-degron motif is present at residues 2–17 (LGAALRRCAVAATAWA). K87 and K113 each carry N6-acetyllysine. T141 carries the phosphothreonine modification.

The protein belongs to the cytochrome c oxidase subunit 5A family. In terms of assembly, component of the cytochrome c oxidase (complex IV, CIV), a multisubunit enzyme composed of 14 subunits. The complex is composed of a catalytic core of 3 subunits MT-CO1, MT-CO2 and MT-CO3, encoded in the mitochondrial DNA, and 11 supernumerary subunits COX4I, COX5A, COX5B, COX6A, COX6B, COX6C, COX7A, COX7B, COX7C, COX8 and NDUFA4, which are encoded in the nuclear genome. The complex exists as a monomer or a dimer and forms supercomplexes (SCs) in the inner mitochondrial membrane with NADH-ubiquinone oxidoreductase (complex I, CI) and ubiquinol-cytochrome c oxidoreductase (cytochrome b-c1 complex, complex III, CIII), resulting in different assemblies (supercomplex SCI(1)III(2)IV(1) and megacomplex MCI(2)III(2)IV(2)). Interacts with AFG1L. Interacts with RAB5IF. Post-translationally, in response to mitochondrial stress, the precursor protein is ubiquitinated by the SIFI complex in the cytoplasm before mitochondrial import, leading to its degradation. Within the SIFI complex, UBR4 initiates ubiquitin chain that are further elongated or branched by KCMF1.

Its subcellular location is the mitochondrion inner membrane. It functions in the pathway energy metabolism; oxidative phosphorylation. Its function is as follows. Component of the cytochrome c oxidase, the last enzyme in the mitochondrial electron transport chain which drives oxidative phosphorylation. The respiratory chain contains 3 multisubunit complexes succinate dehydrogenase (complex II, CII), ubiquinol-cytochrome c oxidoreductase (cytochrome b-c1 complex, complex III, CIII) and cytochrome c oxidase (complex IV, CIV), that cooperate to transfer electrons derived from NADH and succinate to molecular oxygen, creating an electrochemical gradient over the inner membrane that drives transmembrane transport and the ATP synthase. Cytochrome c oxidase is the component of the respiratory chain that catalyzes the reduction of oxygen to water. Electrons originating from reduced cytochrome c in the intermembrane space (IMS) are transferred via the dinuclear copper A center (CU(A)) of subunit 2 and heme A of subunit 1 to the active site in subunit 1, a binuclear center (BNC) formed by heme A3 and copper B (CU(B)). The BNC reduces molecular oxygen to 2 water molecules using 4 electrons from cytochrome c in the IMS and 4 protons from the mitochondrial matrix. This chain is Cytochrome c oxidase subunit 5A, mitochondrial (COX5A), found in Saimiri sciureus (Common squirrel monkey).